Here is a 395-residue protein sequence, read N- to C-terminus: Elongation factor Tu (395 aa).

Positions 10–204 (KPHVNIGTIG…AVDEYIPTPQ (195 aa)) constitute a tr-type G domain. The tract at residues 19–26 (GHVDHGKT) is G1. Residue 19–26 (GHVDHGKT) participates in GTP binding. Mg(2+) is bound at residue T26. The segment at 60–64 (GITIS) is G2. The segment at 81–84 (DCPG) is G3. Residues 81-85 (DCPGH) and 136-139 (NKCD) each bind GTP. Residues 136 to 139 (NKCD) are G4. The tract at residues 174–176 (SAL) is G5.

Belongs to the TRAFAC class translation factor GTPase superfamily. Classic translation factor GTPase family. EF-Tu/EF-1A subfamily. In terms of assembly, monomer.

Its subcellular location is the cytoplasm. It catalyses the reaction GTP + H2O = GDP + phosphate + H(+). In terms of biological role, GTP hydrolase that promotes the GTP-dependent binding of aminoacyl-tRNA to the A-site of ribosomes during protein biosynthesis. This Anoxybacillus flavithermus (strain DSM 21510 / WK1) protein is Elongation factor Tu.